Reading from the N-terminus, the 198-residue chain is MKEFIIKANKAVTNGEINLKDLPGSSGRLDLICRCVNSAFFLSHDLRRDTIFYSVNYGNPNPPVALKFIGDELKRLSPDERSIAMFIQKALSKDASEIWKESTSGIYYSNHEFKEIILEKKNSGKKIFYLHLNGKPLENFDFKNESDVVFILGDHIGLSKEDEEFLEEIGAEQISLSPLELHADHCIILVHNVLDRLK.

Residues L130, G153, 176-181, and C186 each bind S-adenosyl-L-methionine; that span reads LSPLEL.

The protein belongs to the methyltransferase superfamily. TrmY family. Homodimer.

The protein resides in the cytoplasm. The catalysed reaction is pseudouridine(54) in tRNA + S-adenosyl-L-methionine = N(1)-methylpseudouridine(54) in tRNA + S-adenosyl-L-homocysteine + H(+). Specifically catalyzes the N1-methylation of pseudouridine at position 54 (Psi54) in tRNAs. This Methanococcus vannielii (strain ATCC 35089 / DSM 1224 / JCM 13029 / OCM 148 / SB) protein is tRNA (pseudouridine(54)-N(1))-methyltransferase.